The primary structure comprises 375 residues: Alanine racemase (375 aa).

The Proton acceptor; specific for D-alanine role is filled by K35. N6-(pyridoxal phosphate)lysine is present on K35. R133 provides a ligand contact to substrate. Y261 functions as the Proton acceptor; specific for L-alanine in the catalytic mechanism. M309 lines the substrate pocket.

It belongs to the alanine racemase family. Requires pyridoxal 5'-phosphate as cofactor.

It carries out the reaction L-alanine = D-alanine. It functions in the pathway amino-acid biosynthesis; D-alanine biosynthesis; D-alanine from L-alanine: step 1/1. Catalyzes the interconversion of L-alanine and D-alanine. May also act on other amino acids. This is Alanine racemase (alr) from Syntrophobacter fumaroxidans (strain DSM 10017 / MPOB).